Here is a 224-residue protein sequence, read N- to C-terminus: Dimethyl sulfoxide reductase transcriptional activator (224 aa).

An HTH bat-type domain is found at 158–209; the sequence is LTDKQREAAAAAVAKGYYATPRGADLSDLATALGISKSAVSQRLSAVESKLA.

In terms of biological role, involved in activating dmsEABCD gene expression related to dimethyl sulfoxide (DMSO) reductase. Required for anaerobic respiration on dimethyl sulfoxide (DMSO) and trimethylamine N-oxide (TMAO). The sequence is that of Dimethyl sulfoxide reductase transcriptional activator (dmsR) from Halobacterium salinarum (strain ATCC 700922 / JCM 11081 / NRC-1) (Halobacterium halobium).